We begin with the raw amino-acid sequence, 344 residues long: Arginine N-succinyltransferase (344 aa).

A succinyl-CoA-binding site is contributed by Leu125. His229 functions as the Proton donor in the catalytic mechanism.

It belongs to the arginine N-succinyltransferase family.

The catalysed reaction is succinyl-CoA + L-arginine = N(2)-succinyl-L-arginine + CoA + H(+). The protein operates within amino-acid degradation; L-arginine degradation via AST pathway; L-glutamate and succinate from L-arginine: step 1/5. Functionally, catalyzes the transfer of succinyl-CoA to arginine to produce N(2)-succinylarginine. This chain is Arginine N-succinyltransferase, found in Escherichia coli (strain 55989 / EAEC).